The following is a 267-amino-acid chain: Lectin SfL-2 (267 aa).

A run of 4 repeats spans residues 1–67 (GRYT…RRGE), 68–135 (SNNY…QAEG), 136–202 (DTYN…LTGA), and 203–267 (NNYK…GVAN). A 4 X approximate tandem repeats region spans residues 1–267 (GRYTVQNQWG…GPIGFKGVAN (267 aa)).

As to quaternary structure, monomer.

Its function is as follows. Lectin specific for high mannose N-glycans, recognizes the branched moiety of these glycans. Does not recognize other types of N-glycans or monosaccharides. This Solieria filiformis (Red alga) protein is Lectin SfL-2.